A 1226-amino-acid chain; its full sequence is Probable phosphorylase b kinase regulatory subunit alpha (1226 aa).

The interval 666-688 (NEKITTPRGPRTLRRGESVKDRS) is disordered. The segment covering 679 to 688 (RRGESVKDRS) has biased composition (basic and acidic residues).

It belongs to the phosphorylase b kinase regulatory chain family.

The protein operates within glycan biosynthesis; glycogen metabolism. In terms of biological role, phosphorylase b kinase catalyzes the phosphorylation of serine in certain substrates, including troponin I. The alpha chain may bind calmodulin. This Caenorhabditis elegans protein is Probable phosphorylase b kinase regulatory subunit alpha.